The primary structure comprises 145 residues: Nickel-responsive regulator (145 aa).

The Ni(2+) site is built by histidine 77, histidine 88, histidine 90, and cysteine 96.

Belongs to the transcriptional regulatory CopG/NikR family. As to quaternary structure, homotetramer. It depends on Ni(2+) as a cofactor.

Functionally, transcriptional repressor of the nikABCDE operon. Is active in the presence of excessive concentrations of intracellular nickel. The sequence is that of Nickel-responsive regulator from Edwardsiella ictaluri (strain 93-146).